Here is a 689-residue protein sequence, read N- to C-terminus: Glycine--tRNA ligase beta subunit (689 aa).

The protein belongs to the class-II aminoacyl-tRNA synthetase family. As to quaternary structure, tetramer of two alpha and two beta subunits.

It is found in the cytoplasm. The catalysed reaction is tRNA(Gly) + glycine + ATP = glycyl-tRNA(Gly) + AMP + diphosphate. This chain is Glycine--tRNA ligase beta subunit, found in Shewanella baltica (strain OS185).